Reading from the N-terminus, the 402-residue chain is Pyridinium-3,5-bisthiocarboxylic acid mononucleotide nickel insertion protein (402 aa).

Belongs to the LarC family.

The catalysed reaction is Ni(II)-pyridinium-3,5-bisthiocarboxylate mononucleotide = pyridinium-3,5-bisthiocarboxylate mononucleotide + Ni(2+). In terms of biological role, involved in the biosynthesis of a nickel-pincer cofactor ((SCS)Ni(II) pincer complex). Binds Ni(2+), and functions in nickel delivery to pyridinium-3,5-bisthiocarboxylic acid mononucleotide (P2TMN), to form the mature cofactor. Is thus probably required for the activation of nickel-pincer cofactor-dependent enzymes. In Desulfitobacterium hafniense (strain DSM 10664 / DCB-2), this protein is Pyridinium-3,5-bisthiocarboxylic acid mononucleotide nickel insertion protein.